Reading from the N-terminus, the 759-residue chain is MGLPPLEFSDCYLDSPQFRERLKSHEIELDKTNKFIKELIKDGKSLVAAHKNLSCAKRKFAGSLNEFKFRCIGDAETDDEICIARSLQEFAAVLGNLEDERIRMIDNSGEVLISPLEKFRKEQVGAAKEVKKKYDKESEKYCAMLEKHMNLSSKKKEVLLHEADVQLDQMRQHFYEVSLEYVLKVHEVQERKMFEFVEPLLAFLQGLFTFYHHGYELAKDFSDFKTQLSISIQNTRDRFEGTRSEVESLMKKMKENPHEHLALSPYTMEGYLYVQEKRHFGTSWVKHYCTYQRETKQMTMVPFDQKSGGKVGEEEIIHLKSCIRRKTESIEKRFCFDVEGVDRPTVLTMQALSEEDRKLWMEAMDGREPVYNSNKDSQSEGTAQLDNIGFSIIRKCIQAVETRGINEQGLYRIVGVNSRVQKLLNFLMDPKISPETETEIPSEWEIKTITSSLKTYLRMLPGPLMTYQFQRSFIKAAKLENQESRIKEIHCLIHRLPEKNRQMLNLLMTHLANVAAHHKQNLMTVANLGIVFGPTLLRPQEETVAAIMDIKFQNIVVEIIIENYEKMFSTVPEMPQTNSQLHLSRKRSSDSKPPSCSERPLTLFHTTHNTEKEEKRNSVNSSAESVSSSNANSSANSTCTQCSNMNNLNASDPDLDVAKASRPNSLSLNPSPTSPPTCPMFSAPSSPMPTSSTSSDSSPVSVPRKAKALYACKAEHDSELSFSAGTVFDNVYPSQEPGWLEGILNGKTGLIPENYVEFL.

Positions 7–262 (EFSDCYLDSP…MKENPHEHLA (256 aa)) constitute a BAR domain. Positions 265 to 369 (PYTMEGYLYV…WMEAMDGREP (105 aa)) constitute a PH domain. The 186-residue stretch at 383–568 (AQLDNIGFSI…IIIENYEKMF (186 aa)) folds into the Rho-GAP domain. The tract at residues 578 to 701 (NSQLHLSRKR…STSSDSSPVS (124 aa)) is disordered. Positions 608 to 617 (HNTEKEEKRN) are enriched in basic and acidic residues. Residues 618-637 (SVNSSAESVSSSNANSSANS) show a composition bias toward low complexity. Positions 638–650 (TCTQCSNMNNLNA) are enriched in polar residues. Over residues 679-701 (PMFSAPSSPMPTSSTSSDSSPVS) the composition is skewed to low complexity. The region spanning 701–759 (SVPRKAKALYACKAEHDSELSFSAGTVFDNVYPSQEPGWLEGILNGKTGLIPENYVEFL) is the SH3 domain.

The protein localises to the cell junction. Its subcellular location is the focal adhesion. The protein resides in the cytoplasm. It localises to the cytoskeleton. It is found in the endosome membrane. GTPase-activating protein for rhoa and cdc42. The chain is Rho GTPase-activating protein 26 (arhgap26) from Xenopus tropicalis (Western clawed frog).